The chain runs to 200 residues: MIFKQEDFKVFDEQTLDGRMQGIRSVIDPKFEQLAKVILPLLSEDGQAWYAHIAKHLRRTTNPPENTWVAFAPNKRGYKMMPHYEVGMWDDHVYIYLAVEENMKPVSTQKIVAQMTKARELVARLPATFTLSQDHMVNKTEPLTLTHYDLAVQKFAETKHSEVLIGLQIMKSDYETLSFEDTNHIMATFKALRAIYEIIK.

It belongs to the UPF0637 family.

The polypeptide is UPF0637 protein LCK_01372 (Leuconostoc citreum (strain KM20)).